Reading from the N-terminus, the 409-residue chain is Elongation factor Tu (409 aa).

The region spanning Lys-10–Glu-214 is the tr-type G domain. A G1 region spans residues Gly-19–Thr-26. Residue Gly-19–Thr-26 participates in GTP binding. Thr-26 is a Mg(2+) binding site. The tract at residues Gly-60–Asn-64 is G2. The tract at residues Asp-81–Gly-84 is G3. Residues Asp-81–His-85 and Asn-136–Asp-139 each bind GTP. Residues Asn-136–Asp-139 are G4. The G5 stretch occupies residues Ser-174–Leu-176.

The protein belongs to the TRAFAC class translation factor GTPase superfamily. Classic translation factor GTPase family. EF-Tu/EF-1A subfamily. In terms of assembly, monomer.

It is found in the cytoplasm. It catalyses the reaction GTP + H2O = GDP + phosphate + H(+). GTP hydrolase that promotes the GTP-dependent binding of aminoacyl-tRNA to the A-site of ribosomes during protein biosynthesis. The chain is Elongation factor Tu from Synechococcus elongatus (strain ATCC 33912 / PCC 7942 / FACHB-805) (Anacystis nidulans R2).